The chain runs to 71 residues: Large ribosomal subunit protein uL29 (71 aa).

The protein belongs to the universal ribosomal protein uL29 family.

This chain is Large ribosomal subunit protein uL29, found in Methanococcus maripaludis (strain C7 / ATCC BAA-1331).